Here is a 173-residue protein sequence, read N- to C-terminus: Large ribosomal subunit protein uL16 (173 aa).

Belongs to the universal ribosomal protein uL16 family.

This is Large ribosomal subunit protein uL16 from Methanococcus aeolicus (strain ATCC BAA-1280 / DSM 17508 / OCM 812 / Nankai-3).